Reading from the N-terminus, the 248-residue chain is Ribonuclease PH (248 aa).

Residues R93 and 131–133 (GTR) each bind phosphate.

The protein belongs to the RNase PH family. Homohexameric ring arranged as a trimer of dimers.

It catalyses the reaction tRNA(n+1) + phosphate = tRNA(n) + a ribonucleoside 5'-diphosphate. Phosphorolytic 3'-5' exoribonuclease that plays an important role in tRNA 3'-end maturation. Removes nucleotide residues following the 3'-CCA terminus of tRNAs; can also add nucleotides to the ends of RNA molecules by using nucleoside diphosphates as substrates, but this may not be physiologically important. Probably plays a role in initiation of 16S rRNA degradation (leading to ribosome degradation) during starvation. The sequence is that of Ribonuclease PH from Bifidobacterium longum (strain NCC 2705).